The sequence spans 163 residues: Large ribosomal subunit protein uL10 (163 aa).

It belongs to the universal ribosomal protein uL10 family. In terms of assembly, part of the ribosomal stalk of the 50S ribosomal subunit. The N-terminus interacts with L11 and the large rRNA to form the base of the stalk. The C-terminus forms an elongated spine to which L12 dimers bind in a sequential fashion forming a multimeric L10(L12)X complex.

Functionally, forms part of the ribosomal stalk, playing a central role in the interaction of the ribosome with GTP-bound translation factors. The protein is Large ribosomal subunit protein uL10 of Haemophilus ducreyi (strain 35000HP / ATCC 700724).